A 307-amino-acid polypeptide reads, in one-letter code: Ribosomal RNA small subunit methyltransferase A (307 aa).

Residues Asn35, Val37, Gly62, Glu83, Asp113, and Asn136 each contribute to the S-adenosyl-L-methionine site.

Belongs to the class I-like SAM-binding methyltransferase superfamily. rRNA adenine N(6)-methyltransferase family. RsmA subfamily.

It is found in the cytoplasm. It carries out the reaction adenosine(1518)/adenosine(1519) in 16S rRNA + 4 S-adenosyl-L-methionine = N(6)-dimethyladenosine(1518)/N(6)-dimethyladenosine(1519) in 16S rRNA + 4 S-adenosyl-L-homocysteine + 4 H(+). Functionally, specifically dimethylates two adjacent adenosines (A1518 and A1519) in the loop of a conserved hairpin near the 3'-end of 16S rRNA in the 30S particle. May play a critical role in biogenesis of 30S subunits. The polypeptide is Ribosomal RNA small subunit methyltransferase A (Bifidobacterium longum (strain DJO10A)).